The following is a 172-amino-acid chain: SsrA-binding protein (172 aa).

It belongs to the SmpB family.

It is found in the cytoplasm. Its function is as follows. Required for rescue of stalled ribosomes mediated by trans-translation. Binds to transfer-messenger RNA (tmRNA), required for stable association of tmRNA with ribosomes. tmRNA and SmpB together mimic tRNA shape, replacing the anticodon stem-loop with SmpB. tmRNA is encoded by the ssrA gene; the 2 termini fold to resemble tRNA(Ala) and it encodes a 'tag peptide', a short internal open reading frame. During trans-translation Ala-aminoacylated tmRNA acts like a tRNA, entering the A-site of stalled ribosomes, displacing the stalled mRNA. The ribosome then switches to translate the ORF on the tmRNA; the nascent peptide is terminated with the 'tag peptide' encoded by the tmRNA and targeted for degradation. The ribosome is freed to recommence translation, which seems to be the essential function of trans-translation. The chain is SsrA-binding protein from Dehalococcoides mccartyi (strain ATCC BAA-2100 / JCM 16839 / KCTC 5957 / BAV1).